The chain runs to 188 residues: Grand meiotic recombination cluster protein 2 (188 aa).

Polar residues-rich tracts occupy residues 1–13 and 21–31; these read MSDTTEVPRQSSE and ERTNSLKSPDV. A disordered region spans residues 1–31; the sequence is MSDTTEVPRQSSENDQDNNLERTNSLKSPDV.

Functionally, probable transcriptional activator involved in meiotic prophase and synaptonemal complex (SC) assembly. This chain is Grand meiotic recombination cluster protein 2 (GMC2), found in Saccharomyces cerevisiae (strain ATCC 204508 / S288c) (Baker's yeast).